A 243-amino-acid polypeptide reads, in one-letter code: UDP-2,3-diacylglucosamine hydrolase (243 aa).

Mn(2+) contacts are provided by Asp8, His10, Asp41, Asn79, and His114. A substrate-binding site is contributed by 79-80 (NR). Substrate-binding residues include Asp122, Lys164, Lys167, and His195. His195 and His197 together coordinate Mn(2+).

Belongs to the LpxH family. The cofactor is Mn(2+).

It is found in the cell inner membrane. The catalysed reaction is UDP-2-N,3-O-bis[(3R)-3-hydroxytetradecanoyl]-alpha-D-glucosamine + H2O = 2-N,3-O-bis[(3R)-3-hydroxytetradecanoyl]-alpha-D-glucosaminyl 1-phosphate + UMP + 2 H(+). The protein operates within glycolipid biosynthesis; lipid IV(A) biosynthesis; lipid IV(A) from (3R)-3-hydroxytetradecanoyl-[acyl-carrier-protein] and UDP-N-acetyl-alpha-D-glucosamine: step 4/6. Its function is as follows. Hydrolyzes the pyrophosphate bond of UDP-2,3-diacylglucosamine to yield 2,3-diacylglucosamine 1-phosphate (lipid X) and UMP by catalyzing the attack of water at the alpha-P atom. Involved in the biosynthesis of lipid A, a phosphorylated glycolipid that anchors the lipopolysaccharide to the outer membrane of the cell. This chain is UDP-2,3-diacylglucosamine hydrolase, found in Vibrio vulnificus (strain YJ016).